The chain runs to 161 residues: MLKEFKEFALKGNVVDMAVGIIVGGAFGSIVNTLVSEVMMPPLGLLTGGVDFSNLYVVMKEGVEPGPYAALANARAAGAVTLNYGLFLNALVSFTIMAFSVFILVKAINRLRQKADAAPAPPSKKTCPYCLTLVPQQASRCPACTSELPGAADPGARVAAK.

2 helical membrane-spanning segments follow: residues 14–34 and 85–105; these read VVDM…VNTL and GLFL…FILV.

It belongs to the MscL family. Homopentamer.

The protein resides in the cell inner membrane. Its function is as follows. Channel that opens in response to stretch forces in the membrane lipid bilayer. May participate in the regulation of osmotic pressure changes within the cell. The sequence is that of Large-conductance mechanosensitive channel from Chlorobium luteolum (strain DSM 273 / BCRC 81028 / 2530) (Pelodictyon luteolum).